The sequence spans 204 residues: Linker for activation of T-cells family member 2 (204 aa).

The Extracellular portion of the chain corresponds to 1 to 7 (MNAELEL). A helical; Signal-anchor for type III membrane protein transmembrane segment spans residues 8–28 (LWPLSGLLLLLLLGTTAWLCV). Residues Cys27 and Cys30 are each lipidated (S-palmitoyl cysteine). Over 29–204 (QCSRPGVKRN…NGDVATTEKI (176 aa)) the chain is Cytoplasmic. Tyr60 is modified (phosphotyrosine). Ser61 and Ser96 each carry phosphoserine. Phosphotyrosine is present on residues Tyr140, Tyr161, and Tyr193. The interval 147–204 (KPSTPESGTEESEDYQNSVSILQWRESKRTMGARTSPSGSPDEEPDYVNGDVATTEKI) is disordered.

When phosphorylated, interacts with GRB2. May also interact with SOS1, GAB1 and CBL. Phosphorylated on tyrosines following cross-linking of BCR in B-cells, high affinity IgG receptor (FCGR1) in myeloid cells, or high affinity IgE receptor (FCER1) in mast cells; which induces the recruitment of GRB2.

The protein localises to the cell membrane. In terms of biological role, involved in FCER1 (high affinity immunoglobulin epsilon receptor)-mediated signaling in mast cells. May also be involved in BCR (B-cell antigen receptor)-mediated signaling in B-cells and FCGR1 (high affinity immunoglobulin gamma Fc receptor I)-mediated signaling in myeloid cells. Couples activation of these receptors and their associated kinases with distal intracellular events through the recruitment of GRB2. This chain is Linker for activation of T-cells family member 2 (Lat2), found in Rattus norvegicus (Rat).